The chain runs to 368 residues: Regulatory protein E2 (368 aa).

The segment at 1–207 (MKMQTPKESL…NVIDCNDSMC (207 aa)) is transactivation domain. A compositionally biased stretch (polar residues) spans 227-236 (STSTPKTASV). A disordered region spans residues 227-251 (STSTPKTASVGTPKPHIQTPATKRP). The segment at 290–368 (TTPIIHLKGD…VQISVGYMTI (79 aa)) is DNA-binding domain. Residue K297 forms a Glycyl lysine isopeptide (Lys-Gly) (interchain with G-Cter in SUMO) linkage.

The protein belongs to the papillomaviridae E2 protein family. In terms of assembly, binds DNA as homodimer. Interacts with protein E1; this interaction greatly increases E1 DNA-binding activity. Interacts with protein L1; this interaction enhances E2-dependent replication and transcription activation. Interacts with protein L2; this interaction inhibits E2 transcriptional activity but not DNA replication function E2. Interacts with protein E7; this interaction inhibits E7 oncogenic activity. Interacts with host TAF1; this interaction modulates E2-dependent transcriptional regulation. Interacts with host BRD4; this interaction mediates E2 transcriptional activation function. Additionally, the interaction with host BRD4 on mitotic chromosomes mediates tethering of the viral genome. Interacts with host TOPBP1; this interaction is required for optimal viral DNA replication. In terms of processing, phosphorylated. Sumoylation plays a regulatory role in E2 transcriptional activity.

The protein resides in the host nucleus. Functionally, plays a role in the initiation of viral DNA replication. A dimer of E2 interacts with a dimer of E1 in order to improve specificity of E1 DNA binding activity. Once the complex recognizes and binds DNA at specific sites, the E2 dimer is removed from DNA. E2 also regulates viral transcription through binding to the E2RE response element (5'-ACCNNNNNNGGT-3') present in multiple copies in the regulatory regions of the viral genome. Activates or represses transcription depending on E2RE's position with regards to proximal promoter elements including the TATA-box. Repression occurs by sterically hindering the assembly of the transcription initiation complex. In Human papillomavirus 45, this protein is Regulatory protein E2.